A 1127-amino-acid chain; its full sequence is Structural protein MDM1 (1127 aa).

The PXA domain occupies 85–273; that stretch reads NAQIGKELES…WNLRIVSLSQ (189 aa). Residues Ser-670, Ser-673, and Ser-692 each carry the phosphoserine modification. Residues 705–762 adopt a coiled-coil conformation; that stretch reads SNNFRDNIASLTISIDQIEKELELLRHLILKADLTNNQMQLKILKKSQRTLLKELEMK. Residues 782–905 form the PX domain; it reads TKIYIRSYFS…RFLTDPTPFK (124 aa).

It belongs to the sorting nexin family.

The protein localises to the cytoplasm. Functionally, essential for mitotic growth. Mediates organelle inheritance. The protein is Structural protein MDM1 (MDM1) of Saccharomyces cerevisiae (strain ATCC 204508 / S288c) (Baker's yeast).